We begin with the raw amino-acid sequence, 91 residues long: UPF0728 protein v1g117062 (91 aa).

This sequence belongs to the UPF0728 family.

This Nematostella vectensis (Starlet sea anemone) protein is UPF0728 protein v1g117062.